The chain runs to 459 residues: uncharacterized protein (459 aa).

The tract at residues 28–47 (AHDEELTGPPQKPAYAAKPA) is disordered. In terms of domain architecture, FAD-binding PCMH-type spans 35–214 (GPPQKPAYAA…TEVIVKLHPR (180 aa)).

The protein belongs to the oxygen-dependent FAD-linked oxidoreductase family. It depends on FAD as a cofactor.

This is an uncharacterized protein from Mycobacterium tuberculosis (strain CDC 1551 / Oshkosh).